Here is a 334-residue protein sequence, read N- to C-terminus: UDP-glucose 4-epimerase (334 aa).

Residues 11–12, 31–36, 50–51, 72–76, Asn91, Thr116, Tyr140, Lys144, and Phe168 contribute to the NAD(+) site; these read YI, DNLQKG, DI, and FAANS. Positions 116 and 140 each coordinate substrate. Tyr140 serves as the catalytic Proton acceptor. Residues Asn169, 188–189, 205–207, Arg220, and 281–284 contribute to the substrate site; these read HL, AIF, and RSGD.

The protein belongs to the NAD(P)-dependent epimerase/dehydratase family. As to quaternary structure, homodimer. The cofactor is NAD(+).

The catalysed reaction is UDP-alpha-D-glucose = UDP-alpha-D-galactose. The protein operates within carbohydrate metabolism; galactose metabolism. In terms of biological role, involved in the metabolism of galactose. Catalyzes the conversion of UDP-galactose (UDP-Gal) to UDP-glucose (UDP-Glc) through a mechanism involving the transient reduction of NAD. In Halalkalibacterium halodurans (strain ATCC BAA-125 / DSM 18197 / FERM 7344 / JCM 9153 / C-125) (Bacillus halodurans), this protein is UDP-glucose 4-epimerase (galE).